We begin with the raw amino-acid sequence, 374 residues long: Glutamate 5-kinase (374 aa).

Lysine 13 contributes to the ATP binding site. Positions 54, 141, and 153 each coordinate substrate. Serine 173 to aspartate 174 is an ATP binding site. In terms of domain architecture, PUA spans lysine 278–proline 355.

This sequence belongs to the glutamate 5-kinase family.

It is found in the cytoplasm. It carries out the reaction L-glutamate + ATP = L-glutamyl 5-phosphate + ADP. The protein operates within amino-acid biosynthesis; L-proline biosynthesis; L-glutamate 5-semialdehyde from L-glutamate: step 1/2. Its function is as follows. Catalyzes the transfer of a phosphate group to glutamate to form L-glutamate 5-phosphate. The chain is Glutamate 5-kinase from Roseobacter denitrificans (strain ATCC 33942 / OCh 114) (Erythrobacter sp. (strain OCh 114)).